The sequence spans 359 residues: 4-hydroxy-3-methylbut-2-en-1-yl diphosphate synthase (flavodoxin) (359 aa).

[4Fe-4S] cluster contacts are provided by C264, C267, C299, and E306.

Belongs to the IspG family. It depends on [4Fe-4S] cluster as a cofactor.

It carries out the reaction (2E)-4-hydroxy-3-methylbut-2-enyl diphosphate + oxidized [flavodoxin] + H2O + 2 H(+) = 2-C-methyl-D-erythritol 2,4-cyclic diphosphate + reduced [flavodoxin]. It functions in the pathway isoprenoid biosynthesis; isopentenyl diphosphate biosynthesis via DXP pathway; isopentenyl diphosphate from 1-deoxy-D-xylulose 5-phosphate: step 5/6. Its function is as follows. Converts 2C-methyl-D-erythritol 2,4-cyclodiphosphate (ME-2,4cPP) into 1-hydroxy-2-methyl-2-(E)-butenyl 4-diphosphate. The polypeptide is 4-hydroxy-3-methylbut-2-en-1-yl diphosphate synthase (flavodoxin) (Helicobacter pylori (strain HPAG1)).